Consider the following 607-residue polypeptide: Developmental gene 1062 protein (607 aa).

Disordered regions lie at residues 62-84 (LQGQ…HNNQ), 334-451 (ICDD…SNFQ), and 568-602 (DNNT…NDLL). Positions 334–363 (ICDDSSNSSTPSLSSYSNGNNKYNNNNNDS) are enriched in low complexity. The span at 364 to 382 (SESDESDDDDNNDDDDNDS) shows a compositional bias: acidic residues. Composition is skewed to low complexity over residues 383–451 (IDFN…SNFQ) and 568–582 (DNNT…ISVN).

This chain is Developmental gene 1062 protein (DG1062), found in Dictyostelium discoideum (Social amoeba).